We begin with the raw amino-acid sequence, 184 residues long: Small ribosomal subunit protein uS4c (184 aa).

The S4 RNA-binding domain maps to 82–143 (MRLDNILFRL…KQRSKALIQN (62 aa)).

It belongs to the universal ribosomal protein uS4 family. Part of the 30S ribosomal subunit. Contacts protein S5. The interaction surface between S4 and S5 is involved in control of translational fidelity.

The protein localises to the plastid. Its subcellular location is the chloroplast. Functionally, one of the primary rRNA binding proteins, it binds directly to 16S rRNA where it nucleates assembly of the body of the 30S subunit. In terms of biological role, with S5 and S12 plays an important role in translational accuracy. This Patersonia fragilis (Short purple-flag) protein is Small ribosomal subunit protein uS4c (rps4).